The sequence spans 595 residues: Anthranilate synthase alpha subunit 1, chloroplastic (595 aa).

Residues 1–54 constitute a chloroplast transit peptide; sequence MSSSMNVATMQALTFSRRLLPSVASRYLSSSSVTVTGYSGRSSAYAPSFRSIKC. V55 is modified (N-acetylvaline). Residues S115 and 356-358 each bind L-tryptophan; that span reads PYM. 391–392 serves as a coordination point for chorismate; sequence GT. E418 is a binding site for Mg(2+). Chorismate is bound by residues Y506, R526, 558-560, and G560; that span reads GAG. E573 lines the Mg(2+) pocket.

It belongs to the anthranilate synthase component I family. Heterotetramer consisting of two non-identical subunits: a beta subunit and a large alpha subunit. Mg(2+) serves as cofactor. As to expression, expressed in the central cylinder of mature primary root zones, including pericycle and early lateral root primordia, and vasculature of cotyledons.

Its subcellular location is the plastid. The protein resides in the chloroplast. It carries out the reaction chorismate + L-glutamine = anthranilate + pyruvate + L-glutamate + H(+). It participates in amino-acid biosynthesis; L-tryptophan biosynthesis; L-tryptophan from chorismate: step 1/5. With respect to regulation, feedback inhibition by tryptophan. Its function is as follows. Part of a heterotetrameric complex that catalyzes the two-step biosynthesis of anthranilate, an intermediate in the biosynthesis of L-tryptophan. In the first step, the glutamine-binding beta subunit of anthranilate synthase (AS) provides the glutamine amidotransferase activity which generates ammonia as a substrate that, along with chorismate, is used in the second step, catalyzed by the large alpha subunit of AS to produce anthranilate. Plays an important regulatory role in auxin production via the tryptophan-dependent biosynthetic pathway. This Arabidopsis thaliana (Mouse-ear cress) protein is Anthranilate synthase alpha subunit 1, chloroplastic (ASA1).